A 181-amino-acid polypeptide reads, in one-letter code: Large ribosomal subunit protein uL5 (181 aa).

It belongs to the universal ribosomal protein uL5 family. In terms of assembly, part of the 50S ribosomal subunit; part of the 5S rRNA/L5/L18/L25 subcomplex. Contacts the 5S rRNA and the P site tRNA. Forms a bridge to the 30S subunit in the 70S ribosome.

This is one of the proteins that bind and probably mediate the attachment of the 5S RNA into the large ribosomal subunit, where it forms part of the central protuberance. In the 70S ribosome it contacts protein S13 of the 30S subunit (bridge B1b), connecting the 2 subunits; this bridge is implicated in subunit movement. Contacts the P site tRNA; the 5S rRNA and some of its associated proteins might help stabilize positioning of ribosome-bound tRNAs. This chain is Large ribosomal subunit protein uL5, found in Campylobacter jejuni subsp. jejuni serotype O:6 (strain 81116 / NCTC 11828).